Reading from the N-terminus, the 323-residue chain is Mitochondrial glutamate carrier 1 (323 aa).

Solcar repeat units follow at residues 6–93 (ISLP…FRHQ), 101–214 (LTLP…LNQL), and 223–312 (SPFY…GIAE). 6 helical membrane-spanning segments follow: residues 12–32 (LING…IDLA), 62–82 (YFGM…EKAI), 107–127 (MLAG…MEML), 189–209 (GLGA…PLFA), 223–243 (SPFY…AVAV), and 292–312 (ALVI…GIAE).

It belongs to the mitochondrial carrier (TC 2.A.29) family.

The protein localises to the mitochondrion inner membrane. The enzyme catalyses L-glutamate(in) + H(+)(in) = L-glutamate(out) + H(+)(out). Its function is as follows. Mitochondrial glutamate/H(+) symporter. Responsible for the transport of glutamate from the cytosol into the mitochondrial matrix with the concomitant import of a proton. Plays a role in the control of glucose-stimulated insulin secretion. The sequence is that of Mitochondrial glutamate carrier 1 (Slc25a22) from Mus musculus (Mouse).